We begin with the raw amino-acid sequence, 63 residues long: Large ribosomal subunit protein uL29 (63 aa).

This sequence belongs to the universal ribosomal protein uL29 family.

The sequence is that of Large ribosomal subunit protein uL29 from Pseudoalteromonas atlantica (strain T6c / ATCC BAA-1087).